We begin with the raw amino-acid sequence, 1360 residues long: DNA-directed RNA polymerase subunit beta (1360 aa).

It belongs to the RNA polymerase beta chain family. In terms of assembly, the RNAP catalytic core consists of 2 alpha, 1 beta, 1 beta' and 1 omega subunit. When a sigma factor is associated with the core the holoenzyme is formed, which can initiate transcription.

The enzyme catalyses RNA(n) + a ribonucleoside 5'-triphosphate = RNA(n+1) + diphosphate. Functionally, DNA-dependent RNA polymerase catalyzes the transcription of DNA into RNA using the four ribonucleoside triphosphates as substrates. In Caulobacter sp. (strain K31), this protein is DNA-directed RNA polymerase subunit beta.